The chain runs to 1980 residues: Unconventional myosin-IXb (1980 aa).

S2 is subject to N-acetylserine. The Ras-associating domain occupies A15–A114. Residues A146–H954 enclose the Myosin motor domain. An ATP-binding site is contributed by G239–T246. A disordered region spans residues G715 to S736. Phosphoserine is present on residues S717 and S718. Residues K845–S856 form an actin-binding region. The tract at residues L941–F1045 is neck or regulatory domain. IQ domains follow at residues L958–V978, K981–E1001, R1002–H1024, and Q1025–K1054. Phosphoserine is present on S1046. Residues S1046–E1980 form a tail region. 3 disordered regions span residues M1049 to T1281, S1302 to S1380, and D1394 to V1449. Over residues T1097–G1106 the composition is skewed to polar residues. Phosphoserine occurs at positions 1108, 1115, and 1177. Composition is skewed to basic and acidic residues over residues E1129–S1177 and E1186–G1195. Phosphoserine is present on residues S1220, S1222, S1229, S1237, S1243, and S1247. Residues R1235–S1247 show a composition bias toward low complexity. Residues D1250 to E1265 show a composition bias toward basic and acidic residues. 3 positions are modified to phosphoserine: S1266, S1268, and S1304. Residue T1319 is modified to Phosphothreonine. A phosphoserine mark is found at S1327, S1329, and S1337. A compositionally biased stretch (polar residues) spans S1327–E1344. The Phorbol-ester/DAG-type zinc finger occupies G1592–C1641. S1649 bears the Phosphoserine mark. One can recognise a Rho-GAP domain in the interval D1663 to Y1848. An interaction with RHOA region spans residues A1699–R1704. Residues I1841–A1861 adopt a coiled-coil conformation. The residue at position 1886 (S1886) is a Phosphoserine. The segment at V1891–K1923 is disordered. Positions D1918–D1948 form a coiled coil. A phosphoserine mark is found at S1932, S1952, and S1959. Basic and acidic residues predominate over residues K1937–D1953. The disordered stretch occupies residues K1937–E1980. Position 1965 is a phosphothreonine (T1965). The span at L1969 to E1980 shows a compositional bias: basic and acidic residues.

The protein belongs to the TRAFAC class myosin-kinesin ATPase superfamily. Myosin family. As to quaternary structure, interacts (via IQ domains) with CALM. Interacts with RHOA. Interacts (via Rho-GAP domain) with ROBO1; this inhibits the interaction with RHOA and the stimulation of RHOA GTPase activity, and thereby increases the levels of active RHOA. Expressed in testis, lung, thymus, brain, liver, spleen and heart muscle. Detected in lung, testis, spleen and liver, and at reduced level in different brain regions (at protein level).

The protein localises to the cytoplasm. It is found in the cell cortex. Its subcellular location is the perinuclear region. The protein resides in the cytoskeleton. In terms of biological role, myosins are actin-based motor molecules with ATPase activity. Unconventional myosins serve in intracellular movements. Binds actin with high affinity both in the absence and presence of ATP and its mechanochemical activity is inhibited by calcium ions. Also acts as a GTPase activator for RHOA. Plays a role in the regulation of cell migration via its role as RHOA GTPase activator. This is regulated by its interaction with the SLIT2 receptor ROBO1; interaction with ROBO1 impairs interaction with RHOA and subsequent activation of RHOA GTPase activity, and thereby leads to increased levels of active, GTP-bound RHOA. In Rattus norvegicus (Rat), this protein is Unconventional myosin-IXb (Myo9b).